The chain runs to 532 residues: Intercellular adhesion molecule 1 (532 aa).

Positions 1 to 27 (MAPSSPRPALPALLVLLGALFPGPGNA) are cleaved as a signal peptide. Residues 28-480 (QTSVSPPKVI…TVNVLSPRYE (453 aa)) lie on the Extracellular side of the membrane. Ig-like C2-type domains follow at residues 41 to 103 (GGSV…QSTA) and 128 to 193 (GKDL…LDLR). Cystine bridges form between Cys-48/Cys-92, Cys-52/Cys-96, and Cys-135/Cys-186. The Cell attachment site; atypical motif lies at 152-154 (RGE). 2 N-linked (GlcNAc...) asparagine glycosylation sites follow: Asn-202 and Asn-267. 2 Ig-like C2-type domains span residues 230-297 (DTQG…LGTQ) and 325-378 (GTEV…LEVA). 2 cysteine pairs are disulfide-bonded: Cys-237–Cys-290 and Cys-332–Cys-371. N-linked (GlcNAc...) asparagine glycans are attached at residues Asn-385 and Asn-406. 3 cysteine pairs are disulfide-bonded: Cys-403–Cys-419, Cys-419–Cys-457, and Cys-431–Cys-457. The Ig-like C2-type 5 domain occupies 412-464 (NSQQTPMCQAWGNPLPELKCLKDGTFPLPVGESVTVTRDLEGTYLCRARSTQG). Residues 481-503 (FVIIAVVAAAVIMGTAGLSTYLY) traverse the membrane as a helical segment. Over 504-532 (NRQRKIRKYRLQQAQKGTPMKPNTQATPP) the chain is Cytoplasmic. Phosphothreonine is present on residues Thr-521 and Thr-530.

This sequence belongs to the immunoglobulin superfamily. ICAM family. Homodimer. Interacts with MUC1 and promotes cell aggregation in epithelial cells. Interacts with ARHGEF26/SGEF. Interacts (on T cell side) with CD81, CD247 and CD9 at immunological synapses between antigen-presenting cells and T cells. Post-translationally, monoubiquitinated, which is promoted by MARCH9 and leads to endocytosis.

The protein resides in the membrane. Its function is as follows. ICAM proteins are ligands for the leukocyte adhesion protein LFA-1 (integrin alpha-L/beta-2). During leukocyte trans-endothelial migration, ICAM1 engagement promotes the assembly of endothelial apical cups through ARHGEF26/SGEF and RHOG activation. The chain is Intercellular adhesion molecule 1 (ICAM1) from Gorilla gorilla gorilla (Western lowland gorilla).